The following is a 376-amino-acid chain: Queuine tRNA-ribosyltransferase (376 aa).

The active-site Proton acceptor is aspartate 93. Residues 93–97 (DSGGF), aspartate 147, glutamine 190, and glycine 217 each bind substrate. The interval 248–254 (GVGKPDD) is RNA binding. Residue aspartate 267 is the Nucleophile of the active site. Zn(2+)-binding residues include cysteine 305, cysteine 307, cysteine 310, and histidine 336.

The protein belongs to the queuine tRNA-ribosyltransferase family. In terms of assembly, homodimer. Within each dimer, one monomer is responsible for RNA recognition and catalysis, while the other monomer binds to the replacement base PreQ1. Zn(2+) serves as cofactor.

It catalyses the reaction 7-aminomethyl-7-carbaguanine + guanosine(34) in tRNA = 7-aminomethyl-7-carbaguanosine(34) in tRNA + guanine. It functions in the pathway tRNA modification; tRNA-queuosine biosynthesis. Functionally, catalyzes the base-exchange of a guanine (G) residue with the queuine precursor 7-aminomethyl-7-deazaguanine (PreQ1) at position 34 (anticodon wobble position) in tRNAs with GU(N) anticodons (tRNA-Asp, -Asn, -His and -Tyr). Catalysis occurs through a double-displacement mechanism. The nucleophile active site attacks the C1' of nucleotide 34 to detach the guanine base from the RNA, forming a covalent enzyme-RNA intermediate. The proton acceptor active site deprotonates the incoming PreQ1, allowing a nucleophilic attack on the C1' of the ribose to form the product. After dissociation, two additional enzymatic reactions on the tRNA convert PreQ1 to queuine (Q), resulting in the hypermodified nucleoside queuosine (7-(((4,5-cis-dihydroxy-2-cyclopenten-1-yl)amino)methyl)-7-deazaguanosine). The sequence is that of Queuine tRNA-ribosyltransferase from Ruegeria pomeroyi (strain ATCC 700808 / DSM 15171 / DSS-3) (Silicibacter pomeroyi).